Here is a 152-residue protein sequence, read N- to C-terminus: Transcriptional repressor NrdR (152 aa).

Residues 3-34 fold into a zinc finger; that stretch reads CPFCGHADTQVVDSRVSEDGASIRRRRRCLEC. An ATP-cone domain is found at 49–139; the sequence is PQVVKQDGHR…VYRSFQDVAE (91 aa).

It belongs to the NrdR family. It depends on Zn(2+) as a cofactor.

In terms of biological role, negatively regulates transcription of bacterial ribonucleotide reductase nrd genes and operons by binding to NrdR-boxes. The sequence is that of Transcriptional repressor NrdR from Laribacter hongkongensis (strain HLHK9).